Here is a 174-residue protein sequence, read N- to C-terminus: TPLGPARSLPQSFLLKCLEQVRKIQADGAELQERLCATHKLCHPEELVLLGHSLGIPQAPLSSCSSQSLQLTSCLDQLHGGLFLYQGLLQALAGISPELAPTLDTLQLDVTDFATNIWLQMEDLGVAPAVQPTQGTMPTFTSAFQRRAGGVLVASQLQRFLGLAYRGLRYLAEP.

Disulfide bonds link cysteine 36/cysteine 42 and cysteine 64/cysteine 74. Threonine 133 carries an O-linked (GalNAc...) threonine glycan.

Belongs to the IL-6 superfamily. As to quaternary structure, monomer. Post-translationally, O-glycosylated.

Its subcellular location is the secreted. Granulocyte/macrophage colony-stimulating factors are cytokines that act in hematopoiesis by controlling the production, differentiation, and function of 2 related white cell populations of the blood, the granulocytes and the monocytes-macrophages. This CSF induces granulocytes. The polypeptide is Granulocyte colony-stimulating factor (CSF3) (Ovis aries (Sheep)).